Consider the following 587-residue polypeptide: Chaperonin CPN60, mitochondrial (587 aa).

The N-terminal 32 residues, 1–32 (MYRLISSIASKARVARNCTSQIGSRLSSTRNY), are a transit peptide targeting the mitochondrion.

This sequence belongs to the chaperonin (HSP60) family.

The protein localises to the mitochondrion. In terms of biological role, implicated in mitochondrial protein import and macromolecular assembly. May facilitate the correct folding of imported proteins. May also prevent misfolding and promote the refolding and proper assembly of unfolded polypeptides generated under stress conditions in the mitochondrial matrix. The polypeptide is Chaperonin CPN60, mitochondrial (Brassica napus (Rape)).